Consider the following 318-residue polypeptide: L-lactate dehydrogenase (318 aa).

NAD(+) is bound by residues Val16, Asp37, and Tyr69. Substrate-binding positions include Gln86, Arg92, and 124–127 (NPVD). Residues 122–124 (ASN) and Ser147 contribute to the NAD(+) site. A substrate-binding site is contributed by 152 to 155 (DSAR). His179 serves as the catalytic Proton acceptor. Tyr223 bears the Phosphotyrosine mark. Thr232 contributes to the substrate binding site.

This sequence belongs to the LDH/MDH superfamily. LDH family. In terms of assembly, homotetramer.

The protein localises to the cytoplasm. It carries out the reaction (S)-lactate + NAD(+) = pyruvate + NADH + H(+). The protein operates within fermentation; pyruvate fermentation to lactate; (S)-lactate from pyruvate: step 1/1. Catalyzes the conversion of lactate to pyruvate. This is L-lactate dehydrogenase from Mycoplasma mycoides subsp. mycoides SC (strain CCUG 32753 / NCTC 10114 / PG1).